Consider the following 197-residue polypeptide: Cytochrome c-L (197 aa).

An N-terminal signal peptide occupies residues 1-25; sequence MMNRVKIGTALLGLTLAGIALPALA. Heme c-binding residues include C90, C93, and H94.

In terms of processing, binds 1 heme c group covalently per subunit.

The protein resides in the periplasm. In terms of biological role, electron acceptor for MDH. Acts in methanol oxidation. This chain is Cytochrome c-L (moxG), found in Methylorubrum extorquens (strain ATCC 14718 / DSM 1338 / JCM 2805 / NCIMB 9133 / AM1) (Methylobacterium extorquens).